We begin with the raw amino-acid sequence, 120 residues long: Neuromedin-B (120 aa).

The signal sequence occupies residues 1 to 29 (MSAVPLTRMLPLRFLTHLLLLSFIPLYFC). Positions 30–44 (MEFSEDARNIEKIRR) are excised as a propeptide. A Methionine amide modification is found at methionine 54. Positions 58 to 120 (SLQDTYNPSE…MDDYIKTTQK (63 aa)) are excised as a propeptide.

This sequence belongs to the bombesin/neuromedin-B/ranatensin family. As to expression, brain, intestine, and ovaries and early embryos (stages 2 and 10).

It is found in the secreted. In terms of biological role, stimulates smooth muscle contraction. The protein is Neuromedin-B (nmb) of Xenopus laevis (African clawed frog).